A 452-amino-acid chain; its full sequence is Bifunctional protein GlmU (452 aa).

The tract at residues 1 to 232 (MTTRTSLTIV…EDEVRGINTK (232 aa)) is pyrophosphorylase. UDP-N-acetyl-alpha-D-glucosamine is bound by residues 11-14 (LAAG), Lys25, Gln78, and 83-84 (GT). Asp108 is a binding site for Mg(2+). UDP-N-acetyl-alpha-D-glucosamine-binding residues include Gly144, Glu158, Asn173, and Asn230. Asn230 is a Mg(2+) binding site. Positions 233–253 (AQLAEAEAVMQTRLRQAAMTA) are linker. The tract at residues 254–452 (GVTLISPETI…SARARKPKTS (199 aa)) is N-acetyltransferase. UDP-N-acetyl-alpha-D-glucosamine-binding residues include Arg319 and Lys337. His349 (proton acceptor) is an active-site residue. UDP-N-acetyl-alpha-D-glucosamine-binding residues include Tyr352 and Asn363. Acetyl-CoA-binding positions include Ala366, 372-373 (NY), Ser391, Ser409, and Arg426.

In the N-terminal section; belongs to the N-acetylglucosamine-1-phosphate uridyltransferase family. It in the C-terminal section; belongs to the transferase hexapeptide repeat family. As to quaternary structure, homotrimer. Mg(2+) serves as cofactor.

Its subcellular location is the cytoplasm. The enzyme catalyses alpha-D-glucosamine 1-phosphate + acetyl-CoA = N-acetyl-alpha-D-glucosamine 1-phosphate + CoA + H(+). It carries out the reaction N-acetyl-alpha-D-glucosamine 1-phosphate + UTP + H(+) = UDP-N-acetyl-alpha-D-glucosamine + diphosphate. It functions in the pathway nucleotide-sugar biosynthesis; UDP-N-acetyl-alpha-D-glucosamine biosynthesis; N-acetyl-alpha-D-glucosamine 1-phosphate from alpha-D-glucosamine 6-phosphate (route II): step 2/2. Its pathway is nucleotide-sugar biosynthesis; UDP-N-acetyl-alpha-D-glucosamine biosynthesis; UDP-N-acetyl-alpha-D-glucosamine from N-acetyl-alpha-D-glucosamine 1-phosphate: step 1/1. It participates in bacterial outer membrane biogenesis; LPS lipid A biosynthesis. Catalyzes the last two sequential reactions in the de novo biosynthetic pathway for UDP-N-acetylglucosamine (UDP-GlcNAc). The C-terminal domain catalyzes the transfer of acetyl group from acetyl coenzyme A to glucosamine-1-phosphate (GlcN-1-P) to produce N-acetylglucosamine-1-phosphate (GlcNAc-1-P), which is converted into UDP-GlcNAc by the transfer of uridine 5-monophosphate (from uridine 5-triphosphate), a reaction catalyzed by the N-terminal domain. This Rhodopseudomonas palustris (strain BisB5) protein is Bifunctional protein GlmU.